A 449-amino-acid polypeptide reads, in one-letter code: Na(+)-translocating NADH-quinone reductase subunit A (449 aa).

Belongs to the NqrA family. In terms of assembly, composed of six subunits; NqrA, NqrB, NqrC, NqrD, NqrE and NqrF.

The catalysed reaction is a ubiquinone + n Na(+)(in) + NADH + H(+) = a ubiquinol + n Na(+)(out) + NAD(+). Its function is as follows. NQR complex catalyzes the reduction of ubiquinone-1 to ubiquinol by two successive reactions, coupled with the transport of Na(+) ions from the cytoplasm to the periplasm. NqrA to NqrE are probably involved in the second step, the conversion of ubisemiquinone to ubiquinol. In Actinobacillus pleuropneumoniae serotype 5b (strain L20), this protein is Na(+)-translocating NADH-quinone reductase subunit A.